Consider the following 483-residue polypeptide: Chromatin structure-remodeling complex protein RSC6 (483 aa).

Disordered regions lie at residues 142-183 (KRKR…EAES) and 273-309 (AQDG…DKPE). Over residues 148-158 (SLSLPLNLQQP) the composition is skewed to low complexity. A compositionally biased stretch (acidic residues) spans 171–180 (DNGEDEDSAE).

This sequence to yeast SNF12. In terms of assembly, interacts directly with RSC8. Component of the two forms of the RSC complex composed of at least either RSC1 or RSC2, and ARP7, ARP9, LDB7, NPL6, RSC3, RSC30, RSC4, RSC58, RSC6, RSC8, RSC9, SFH1, STH1, HTL1 and probably RTT102. The complexes interact with histone and histone variant components of centromeric chromatin.

Its subcellular location is the nucleus. In terms of biological role, component of the chromatin structure-remodeling complex (RSC), which is involved in transcription regulation and nucleosome positioning. RSC is responsible for the transfer of a histone octamer from a nucleosome core particle to naked DNA. The reaction requires ATP and involves an activated RSC-nucleosome intermediate. Remodeling reaction also involves DNA translocation, DNA twist and conformational change. As a reconfigurer of centromeric and flanking nucleosomes, RSC complex is required both for proper kinetochore function in chromosome segregation and, via a PKC1-dependent signaling pathway, for organization of the cellular cytoskeleton. This subunit is essential for mitotic growth and suppresses formamide sensitivity of the RSC8 mutants. This chain is Chromatin structure-remodeling complex protein RSC6 (RSC6), found in Saccharomyces cerevisiae (strain ATCC 204508 / S288c) (Baker's yeast).